We begin with the raw amino-acid sequence, 380 residues long: MILRLKDQTLIKINSTRSYLSSLVFRRDSHSQARTKPDHDRRRRGYERDVRIEEKKEHDGLFLCKSKGQHLLTNTRILDSIVRSSDIRPTDTVLEIGPGTGNLTMKLLEAAQNVVAVELDKRMVEILRKRVSDHGFADKLTIIQKDVLKTDFPHFDLVVANIPYNISSPLVAKLVYGSNTFRSATLLLQKEFSRRLLANPGDSDFNRLAVNVKLVADVKFVMDVSKREFVPPPKVDSSVIRITPKEIIPDVNVQEWLAFTRTCFGKKNKTLGSMFRQKKKVMELQSLSAGRHGSNVEVMNQTGGDSDSDVEEDGKDDLLCLDTDASMFKERVIEILRTNGFEEKRPSKLSHRELLHLLSLFNQAGIFFHDITSLQMDLHE.

A mitochondrion-targeting transit peptide spans 1–26 (MILRLKDQTLIKINSTRSYLSSLVFR). S-adenosyl-L-methionine is bound by residues H70, L72, G97, E118, D146, and N161.

Belongs to the class I-like SAM-binding methyltransferase superfamily. rRNA adenine N(6)-methyltransferase family.

The protein localises to the mitochondrion. The catalysed reaction is adenosine(1914)/adenosine(1915) in 18S rRNA + 4 S-adenosyl-L-methionine = N(6)-dimethyladenosine(1914)/N(6)-dimethyladenosine(1915) in 18S rRNA + 4 S-adenosyl-L-homocysteine + 4 H(+). Its function is as follows. N6-adenine methyltransferase which modifies the AA dinucleotide at the plant mitochondrial 18S rRNA nucleotides A1914 and A1915. Not active as mitochondrial transcription factor. This Arabidopsis thaliana (Mouse-ear cress) protein is Ribosomal RNA small subunit methyltransferase, mitochondrial.